The chain runs to 449 residues: Cyclin-B1-1 (449 aa).

Disordered regions lie at residues 1–34 and 90–143; these read MATRSQNVAAAPQPPQNRGNVAALGKQKAVVAGR and AVAP…SVRK. 2 stretches are compositionally biased toward low complexity: residues 90–102 and 121–134; these read AVAPAAVARPAQR and EISSDSDQSMRQQS.

Belongs to the cyclin family. Cyclin AB subfamily.

This is Cyclin-B1-1 (CYCB1-1) from Oryza sativa subsp. japonica (Rice).